A 320-amino-acid polypeptide reads, in one-letter code: MRSAQVYRWQIPMDAGVVLRDRRLKTRDGLYVCLREGEREGWGEISPLPGFSQETWEEAQSVLLAWVNNWLAGDCELPQMPSVAFGVSCALAELTDALPQAANYRAAPLCNGDPDDLILKLADMPGEKVAKVKVGLYEAVRDGMVVNLLLEAIPDLHLRLDANRAWTPLKGQQFAKYVNPDYRHRIAFLEEPCKTRDDSRAFARETGIAIAWDESLREPDFAFVAEEGVRAVVIKPTLTGSLDKVREQVKAAHALGLTAVISSSIESSLGLTQLARIAAWLTPDTIPGLDTLDLMQVQQVRRWPGSPLPLVDVDALERLL.

The active-site Proton donor is K133. Residues D161, E190, and D213 each coordinate Mg(2+). The active-site Proton acceptor is K235.

The protein belongs to the mandelate racemase/muconate lactonizing enzyme family. MenC type 1 subfamily. A divalent metal cation serves as cofactor.

It catalyses the reaction (1R,6R)-6-hydroxy-2-succinyl-cyclohexa-2,4-diene-1-carboxylate = 2-succinylbenzoate + H2O. Its pathway is quinol/quinone metabolism; 1,4-dihydroxy-2-naphthoate biosynthesis; 1,4-dihydroxy-2-naphthoate from chorismate: step 4/7. The protein operates within quinol/quinone metabolism; menaquinone biosynthesis. Its function is as follows. Converts 2-succinyl-6-hydroxy-2,4-cyclohexadiene-1-carboxylate (SHCHC) to 2-succinylbenzoate (OSB). In Escherichia coli O7:K1 (strain IAI39 / ExPEC), this protein is o-succinylbenzoate synthase.